We begin with the raw amino-acid sequence, 1210 residues long: A disintegrin and metalloproteinase with thrombospondin motifs 19 (1210 aa).

An N-terminal signal peptide occupies residues 1–30 (MGPEMRLTRICCCCCLLYQLGFLSHGTTSG). A propeptide spanning residues 31–319 (LQLTPDLEEW…KIADNRREKR (289 aa)) is cleaved from the precursor. A glycan (N-linked (GlcNAc...) asparagine) is linked at Asn54. A disordered region spans residues 55-166 (ATGLSGGSSD…PAQQEEPSAE (112 aa)). Positions 69–78 (RSSGGGGRGQ) are enriched in gly residues. Positions 84-98 (REVRSVARAPQEEAT) are enriched in basic and acidic residues. Acidic residues predominate over residues 113-122 (GAEDEEELES). Polar residues predominate over residues 130–139 (SGDTALSSGT). The segment covering 143–158 (WQPPLPPQRPSSPPPA) has biased composition (pro residues). An N-linked (GlcNAc...) asparagine glycan is attached at Asn263. Residues 295 to 302 (HHCGVISD) carry the Cysteine switch motif. Residue Cys297 participates in Zn(2+) binding. Residues 328–548 (YNIETVVVAD…KASSCLLHTD (221 aa)) enclose the Peptidase M12B domain. 11 disulfide bridges follow: Cys404/Cys469, Cys444/Cys451, Cys463/Cys543, Cys502/Cys527, Cys572/Cys596, Cys583/Cys604, Cys591/Cys623, Cys617/Cys628, Cys648/Cys683, Cys652/Cys688, and Cys663/Cys673. Zn(2+) is bound at residue His485. The active site involves Glu486. Positions 489 and 495 each coordinate Zn(2+). Positions 549-636 (PQSLSSVLVP…ECTRRTPAPE (88 aa)) constitute a Disintegrin domain. The 53-residue stretch at 637–689 (HLAGEWSPWSSCSRSCSSGVSSRERKCPGLGSEARDCNGPRKQYRICENPPCP) folds into the TSP type-1 1 domain. Positions 794-917 (VIKGDFNHTR…PDNQSSKEPG (124 aa)) are spacer. N-linked (GlcNAc...) asparagine glycosylation is found at Asn800, Asn910, Asn931, Asn952, and Asn1012. TSP type-1 domains are found at residues 918-978 (PLFM…NEQP), 979-1040 (CQTR…QDCM), 1042-1086 (VWEA…EDCE), and 1090-1147 (KCYV…QPCN). Intrachain disulfides connect Cys991–Cys1034, Cys995–Cys1039, and Cys1006–Cys1023. The PLAC domain maps to 1163 to 1202 (LTFKCLGDQWPVYCRVIREKNLCQDMRWYQRCCETCRDFY).

It depends on Zn(2+) as a cofactor. Post-translationally, the precursor is cleaved by a furin endopeptidase. In terms of processing, glycosylated. Can be O-fucosylated by POFUT2 on a serine or a threonine residue found within the consensus sequence C1-X(2)-(S/T)-C2-G of the TSP type-1 repeat domains where C1 and C2 are the first and second cysteine residue of the repeat, respectively. Fucosylated repeats can then be further glycosylated by the addition of a beta-1,3-glucose residue by the glucosyltransferase, B3GALTL. Fucosylation mediates the efficient secretion of ADAMTS family members. Can also be C-glycosylated with one or two mannose molecules on tryptophan residues within the consensus sequence W-X-X-W of the TPRs, and N-glycosylated. These other glycosylations can also facilitate secretion. In terms of tissue distribution, expressed predominantly in fetal ovary, low levels of expression is also detected in kidney, heart, skeletal muscle, lung and testis.

Its subcellular location is the secreted. It localises to the extracellular space. The protein resides in the extracellular matrix. The polypeptide is A disintegrin and metalloproteinase with thrombospondin motifs 19 (Adamts19) (Mus musculus (Mouse)).